The following is a 103-amino-acid chain: Matrix Gla protein (103 aa).

An N-terminal signal peptide occupies residues 1–19 (MKSLLPLAILAALAVAALC). 4-carboxyglutamate is present on glutamate 21. A phosphoserine mark is found at serine 22, serine 25, and serine 28. In terms of domain architecture, Gla spans 51-97 (HAKAQERVRELNKPAQEINREACDDYKLCERYALIYGYNAAYNRYFR). A 4-carboxyglutamate mark is found at glutamate 56, glutamate 60, glutamate 67, and glutamate 71. Cysteine 73 and cysteine 79 are disulfide-bonded.

The protein belongs to the osteocalcin/matrix Gla protein family. In terms of processing, requires vitamin K-dependent gamma-carboxylation for its function.

It is found in the secreted. Functionally, associates with the organic matrix of bone and cartilage. Thought to act as an inhibitor of bone formation. The protein is Matrix Gla protein (Mgp) of Rattus norvegicus (Rat).